A 267-amino-acid chain; its full sequence is ATP synthase subunit a (267 aa).

The next 5 membrane-spanning stretches (helical) occupy residues 38 to 58, 98 to 118, 145 to 165, 208 to 228, and 238 to 258; these read WHIDSLLFSVGLGVLFLFVFY, IAPLALTIFVWILLMNTMDLI, NITFGLSLSVFALIVFYSIKI, LFGNLYAGELIFILIALMPWW, and AIFHILVIVLQAFIFMMLTIV.

This sequence belongs to the ATPase A chain family. In terms of assembly, F-type ATPases have 2 components, CF(1) - the catalytic core - and CF(0) - the membrane proton channel. CF(1) has five subunits: alpha(3), beta(3), gamma(1), delta(1), epsilon(1). CF(0) has three main subunits: a(1), b(2) and c(9-12). The alpha and beta chains form an alternating ring which encloses part of the gamma chain. CF(1) is attached to CF(0) by a central stalk formed by the gamma and epsilon chains, while a peripheral stalk is formed by the delta and b chains.

The protein resides in the cell inner membrane. Its function is as follows. Key component of the proton channel; it plays a direct role in the translocation of protons across the membrane. This is ATP synthase subunit a from Psychromonas ingrahamii (strain DSM 17664 / CCUG 51855 / 37).